The following is a 581-amino-acid chain: DNA polymerase alpha subunit B (581 aa).

It belongs to the DNA polymerase alpha subunit B family. DNA polymerase alpha:primase is a four subunit enzyme complex, which is assembled throughout the cell cycle, and consists of the two DNA polymerase subunits A and B, and the DNA primase large and small subunits. Subunit B binds to subunit A.

The protein localises to the nucleus. Its function is as follows. May play an essential role at the early stage of chromosomal DNA replication by coupling the polymerase alpha/primase complex to the cellular replication machinery. Required for the distribution of pie-1 in cell divsion. The protein is DNA polymerase alpha subunit B (div-1) of Caenorhabditis elegans.